Here is a 310-residue protein sequence, read N- to C-terminus: MADAAATAGAGGSGTRSGSKQSTNPADNYHLARRRTLQVVVSSLLTEAGFESAEKASVETLTEMLQSYISEIGRSAKSYCEHTARTQPTLSDIVVTLVEMGFNVDTLPAYAKRSQRMVITAPPVTNQPVTPKALTAGQNRPHPPHIPSHFPEFPDPHTYIKTPTYREPVSDYQVLREKAASQRRDVERALTRFMAKTGETQSLFKDDVSTFPLIAARPFTIPYLTALLPSELEMQQMEETDSSEQDEQTDTENLALHISMEDSGAEKENTSVLQQNPSLSGSRNGEENIIDNPYLRPVKKPKIRRKKSLS.

Residues 1–30 (MADAAATAGAGGSGTRSGSKQSTNPADNYH) form a disordered region. Ala-2 carries the post-translational modification N-acetylalanine. The region spanning 35–102 (RTLQVVVSSL…IVVTLVEMGF (68 aa)) is the Histone-fold; involved in forming hexamer structure in TFIID complex domain. Thr-130 bears the Phosphothreonine mark. A disordered region spans residues 262–310 (DSGAEKENTSVLQQNPSLSGSRNGEENIIDNPYLRPVKKPKIRRKKSLS). Positions 270–283 (TSVLQQNPSLSGSR) are enriched in polar residues. Position 271 is a phosphoserine (Ser-271). A Nuclear localization signal motif is present at residues 294–307 (YLRPVKKPKIRRKK). Over residues 297 to 310 (PVKKPKIRRKKSLS) the composition is skewed to basic residues.

The protein belongs to the TAF8 family. As to quaternary structure, component of the TFIID basal transcription factor complex, composed of TATA-box-binding protein TBP, and a number of TBP-associated factors (TAFs), including TAF1, TAF2, TAF3, TAF4, TAF5, TAF6, TAF7, TAF8, TAF9, TAF10, TAF11, TAF12 and TAF13. Interacts with TBP, TAF1, TAF6, TAF10, TAF11 and TAF13. Component also of a small TAF complex (SMAT) containing TAF8, TAF10 and SUPT7L. Forms a heterodimer with TAF10. Interaction with TAF10 is mediated mainly via its histone fold domain while interaction with SUPT7L is via its C-terminal region.

It is found in the nucleus. It localises to the cytoplasm. The TFIID basal transcription factor complex plays a major role in the initiation of RNA polymerase II (Pol II)-dependent transcription. TFIID recognizes and binds promoters with or without a TATA box via its subunit TBP, a TATA-box-binding protein, and promotes assembly of the pre-initiation complex (PIC). The TFIID complex consists of TBP and TBP-associated factors (TAFs), including TAF1, TAF2, TAF3, TAF4, TAF5, TAF6, TAF7, TAF8, TAF9, TAF10, TAF11, TAF12 and TAF13. The TFIID complex structure can be divided into 3 modules TFIID-A, TFIID-B, and TFIID-C. TAF8 is involved in forming the TFIID-B module, together with TAF5. Mediates both basal and activator-dependent transcription. Plays a role in the differentiation of preadipocyte fibroblasts to adipocytes, however, does not seem to play a role in differentiation of myoblasts. Required for the integration of TAF10 in the TAF complex. May be important for survival of cells of the inner cell mass which constitute the pluripotent cell population of the early embryo. The polypeptide is Transcription initiation factor TFIID subunit 8 (TAF8) (Homo sapiens (Human)).